The sequence spans 529 residues: Potassium voltage-gated channel subfamily A member 6 (529 aa).

The tract at residues 1 to 35 (MRSEKSLTLAAPGEVRGPEGEQQDAGEFQEAEGGG) is disordered. At 1-171 (MRSEKSLTLA…LLFEYPESSG (171 aa)) the chain is on the cytoplasmic side. Serine 3 bears the Phosphoserine mark. Residues 21-30 (EQQDAGEFQE) are compositionally biased toward acidic residues. Residues 172 to 193 (PARGIAIVSVLVILISIVIFCL) form a helical membrane-spanning segment. Topologically, residues 194-262 (ETLPQFRADG…TLGGSFFTDP (69 aa)) are extracellular. The interval 203 to 238 (GRGGSNEGSGTRLSPASRSHEEEDEDEDSYAFPGSI) is disordered. Polar residues predominate over residues 210–219 (GSGTRLSPAS). Residues 263–284 (FFLVETLCIVWFTFELLVRFSA) form a helical membrane-spanning segment. Residue cysteine 285 is the site of S-palmitoyl cysteine attachment. The Cytoplasmic segment spans residues 285 to 295 (CPSKAAFFRNI). A helical transmembrane segment spans residues 296 to 316 (MNIIDLVAIFPYFITLGTELV). The Extracellular segment spans residues 317-337 (QRHEQQSVSGGSGQNGQQAMS). A helical; Voltage-sensor membrane pass occupies residues 338-358 (LAILRVIRLVRVFRIFKLSRH). The Cytoplasmic segment spans residues 359–373 (SKGLQILGKTLQASM). The S4-S5 linker stretch occupies residues 360-373 (KGLQILGKTLQASM). The helical transmembrane segment at 374 to 395 (RELGLLIFFLFIGVILFSSAVY) threads the bilayer. Topologically, residues 396-409 (FAEADDVDSLFPSI) are extracellular. Residues 410-421 (PDAFWWAVVTMT) constitute an intramembrane region (helical). The Selectivity filter signature appears at 422 to 427 (TVGYGD). The stretch at 422 to 429 (TVGYGDMY) is an intramembrane region. Residues 430–436 (PMTVGGK) are Extracellular-facing. A helical membrane pass occupies residues 437 to 465 (IVGSLCAIAGVLTIALPVPVIVSNFNYFY). The Cytoplasmic portion of the chain corresponds to 466-529 (HRETEQEEQG…YAEKRMLTEV (64 aa)). Residues 488-513 (DLKATDNGLGKPDFAEASRERRPSYL) form a disordered region. Positions 500 to 510 (DFAEASRERRP) are enriched in basic and acidic residues. Serine 511 carries the phosphoserine; by PKA modification. Positions 527–529 (TEV) match the PDZ-binding motif.

This sequence belongs to the potassium channel family. A (Shaker) (TC 1.A.1.2) subfamily. Kv1.6/KCNA6 sub-subfamily. As to quaternary structure, homotetramer and heterotetramer of potassium channel proteins. Interacts with KCNAB1 and KCNAB2.

Its subcellular location is the cell membrane. It catalyses the reaction K(+)(in) = K(+)(out). Functionally, voltage-gated potassium channel that mediates transmembrane potassium transport in excitable membranes. Forms tetrameric potassium-selective channels through which potassium ions pass in accordance with their electrochemical gradient. The channel alternates between opened and closed conformations in response to the voltage difference across the membrane. Can form functional homotetrameric channels and heterotetrameric channels that contain variable proportions of KCNA1, KCNA2, KCNA4, KCNA6, and possibly other family members as well; channel properties depend on the type of alpha subunits that are part of the channel. Channel properties are modulated by cytoplasmic beta subunits that regulate the subcellular location of the alpha subunits and promote rapid inactivation. Homotetrameric channels display rapid activation and slow inactivation. In Mus musculus (Mouse), this protein is Potassium voltage-gated channel subfamily A member 6 (Kcna6).